A 283-amino-acid chain; its full sequence is MQVFREKQLLIQAIQKVKSDGKSIGLVPTMGALHEGHLSLVTNALKDSDQVIVSIFVNPTQFDNPEDLEKYPRNLNKDIELLEKETSDIWVFSPTANELYGDKILSQNFDFEGLESVMEGEFRAGHFNGVGTVVKHLFEVITPDKAFFGEKDFQQLQIIRKLIEKTGLPVEIVGCPILREDSGLARSSRNERLSFQNRKEAAFIYEVLQNANRLFGTESAEHTTNWVENQFKNNQHLKLEYFEIADSETLKKVNKKEKGKQYRAFIAAYSDGIRLIDNIALNN.

30–37 contacts ATP; the sequence is MGALHEGH. H37 (proton donor) is an active-site residue. Residue Q61 coordinates (R)-pantoate. Q61 serves as a coordination point for beta-alanine. 149–152 is an ATP binding site; sequence GEKD. Q155 is a (R)-pantoate binding site. ATP is bound by residues L178 and 186-189; that span reads RSSR.

Belongs to the pantothenate synthetase family. Homodimer.

The protein localises to the cytoplasm. The enzyme catalyses (R)-pantoate + beta-alanine + ATP = (R)-pantothenate + AMP + diphosphate + H(+). It participates in cofactor biosynthesis; (R)-pantothenate biosynthesis; (R)-pantothenate from (R)-pantoate and beta-alanine: step 1/1. In terms of biological role, catalyzes the condensation of pantoate with beta-alanine in an ATP-dependent reaction via a pantoyl-adenylate intermediate. The polypeptide is Pantothenate synthetase (Christiangramia forsetii (strain DSM 17595 / CGMCC 1.15422 / KT0803) (Gramella forsetii)).